Here is a 493-residue protein sequence, read N- to C-terminus: Catalase A (493 aa).

Residues 1–24 form a disordered region; sequence MKRKLTGLFGAPVSDRENSMTAGP. Active-site residues include H53 and N126. Y336 is a binding site for heme.

The protein belongs to the catalase family. As to quaternary structure, homodimer. The cofactor is heme.

The enzyme catalyses 2 H2O2 = O2 + 2 H2O. Functionally, decomposes hydrogen peroxide into water and oxygen; serves to protect cells from the toxic effects of hydrogen peroxide. This chain is Catalase A (katA), found in Staphylococcus xylosus.